A 142-amino-acid chain; its full sequence is Large ribosomal subunit protein uL11 (142 aa).

It belongs to the universal ribosomal protein uL11 family. As to quaternary structure, part of the ribosomal stalk of the 50S ribosomal subunit. Interacts with L10 and the large rRNA to form the base of the stalk. L10 forms an elongated spine to which L12 dimers bind in a sequential fashion forming a multimeric L10(L12)X complex. One or more lysine residues are methylated.

Forms part of the ribosomal stalk which helps the ribosome interact with GTP-bound translation factors. This Bartonella henselae (strain ATCC 49882 / DSM 28221 / CCUG 30454 / Houston 1) (Rochalimaea henselae) protein is Large ribosomal subunit protein uL11.